A 125-amino-acid chain; its full sequence is uncharacterized protein (125 aa).

This is an uncharacterized protein from Methanocaldococcus jannaschii (strain ATCC 43067 / DSM 2661 / JAL-1 / JCM 10045 / NBRC 100440) (Methanococcus jannaschii).